The sequence spans 641 residues: MSYVQSIPPHDIEAHLAEHDNKSILRFITCGSVDDGKSTLIGRLLYDAKLVFEDQLANLGRVGSPGAANGKEIDLALLLDGLEAEREQGITIDVAYRYFATSKRKFIVADTPGHEEYTRNMVTGASTADLAIILIDSRQGILQQTRRHSYIASLLGIRHVVLAVNKIDLVDFKQQVYEEIVADYMAFAKELGFASIRPIPISARDGDNVISASANTPWYRGAALLEYLETVELDPTDQAKPFRFPVQMVMRPNADFRGYAGQISCGRISVGDPVVVAKTGQRTSVKAIVTYDGELATAGEGEAVTLVLSDEVDASRGNMLVAPGARPFVADQFQAHVIWFDANPMMPGRSYILRTETDSVSATVTTLKHQVNINSFIREAAKSLQMNEVGVCNISTQAPIAFDAYNDNRATGNFIIVDRVTNATVGAGLIDFPLRRADNVHWHALEVNKSARSAMKNQLPAVLWFTGLSGSGKSTIANELDRILHAQGKHTYLLDGDNVRHGLNRDLGFTEEDRVENIRRVAEVAKLMADAGLIVLVSFISPFRDERRMARELMEEGEFIEIFVDTPLDECARRDPKGLYEKALAGKIANFTGVSSCYEAPENPELHIRTVGHQPNDLALAIEEFLDRRIGGQMTPLQRPT.

The interval methionine 1 to glutamine 458 is sulfate adenylyltransferase. The tr-type G domain maps to lysine 22–threonine 236. The segment at glycine 31 to serine 38 is G1. Position 31–38 (glycine 31–serine 38) interacts with GTP. Residues glycine 89–aspartate 93 form a G2 region. The G3 stretch occupies residues aspartate 110–glycine 113. GTP contacts are provided by residues aspartate 110–histidine 114 and asparagine 165–aspartate 168. The tract at residues asparagine 165–aspartate 168 is G4. Positions serine 202–arginine 204 are G5. The tract at residues leucine 459–threonine 641 is adenylyl-sulfate kinase. Glycine 467–serine 474 is an ATP binding site. Serine 541 functions as the Phosphoserine intermediate in the catalytic mechanism.

This sequence in the C-terminal section; belongs to the APS kinase family. In the N-terminal section; belongs to the TRAFAC class translation factor GTPase superfamily. Classic translation factor GTPase family. CysN/NodQ subfamily. In terms of assembly, sulfate-activating enzymes, NodP and NodQ, may be physically associated.

The enzyme catalyses sulfate + ATP + H(+) = adenosine 5'-phosphosulfate + diphosphate. It carries out the reaction adenosine 5'-phosphosulfate + ATP = 3'-phosphoadenylyl sulfate + ADP + H(+). Proposed to provide activated sulfate for transfer to Nod factor. ATP sulfurylase may be the GTPase, regulating ATP sulfurylase activity. Its function is as follows. APS kinase catalyzes the synthesis of activated sulfate. The polypeptide is Bifunctional enzyme NodQ (nodQ) (Rhizobium meliloti (strain 1021) (Ensifer meliloti)).